The following is a 130-amino-acid chain: uncharacterized protein (130 aa).

Positions 1-62 are disordered; it reads MRMYSSDAHE…ASGVGSSCKR (62 aa). Over residues 21–30 the composition is skewed to pro residues; it reads PPHPLPPTGS.

This is an uncharacterized protein from Homo sapiens (Human).